A 37-amino-acid polypeptide reads, in one-letter code: Mu-agatoxin-Aa1f (37 aa).

Disulfide bonds link C2/C18, C9/C23, C17/C33, and C25/C31. N37 carries the asparagine amide modification.

It belongs to the neurotoxin 07 (Beta/delta-agtx) family. 03 (aga-4) subfamily. Aga sub-subfamily. In terms of tissue distribution, expressed by the venom gland.

It localises to the secreted. Insecticidal neurotoxin that induces an irreversible spastic paralysis when injected into insects. Modifies presynaptic voltage-gated sodium channels (Nav), causing them to open at the normal resting potential of the nerve. This leads to spontaneous release of neurotransmitter and repetitive action potentials in motor neurons. The sequence is that of Mu-agatoxin-Aa1f from Agelenopsis aperta (North American funnel-web spider).